Here is a 121-residue protein sequence, read N- to C-terminus: Large ribosomal subunit protein bL19 (121 aa).

The protein belongs to the bacterial ribosomal protein bL19 family.

Functionally, this protein is located at the 30S-50S ribosomal subunit interface and may play a role in the structure and function of the aminoacyl-tRNA binding site. The sequence is that of Large ribosomal subunit protein bL19 from Polaromonas sp. (strain JS666 / ATCC BAA-500).